The chain runs to 174 residues: Phosphopantetheine adenylyltransferase (174 aa).

Threonine 10 provides a ligand contact to substrate. ATP contacts are provided by residues 10 to 11 and histidine 18; that span reads TF. Lysine 44, leucine 76, and arginine 90 together coordinate substrate. Residues 91-93, glutamate 101, and 126-132 contribute to the ATP site; these read GLR and HAYISSS.

It belongs to the bacterial CoaD family. In terms of assembly, homohexamer. Mg(2+) serves as cofactor.

The protein localises to the cytoplasm. It catalyses the reaction (R)-4'-phosphopantetheine + ATP + H(+) = 3'-dephospho-CoA + diphosphate. Its pathway is cofactor biosynthesis; coenzyme A biosynthesis; CoA from (R)-pantothenate: step 4/5. Reversibly transfers an adenylyl group from ATP to 4'-phosphopantetheine, yielding dephospho-CoA (dPCoA) and pyrophosphate. This is Phosphopantetheine adenylyltransferase from Alkalilimnicola ehrlichii (strain ATCC BAA-1101 / DSM 17681 / MLHE-1).